We begin with the raw amino-acid sequence, 458 residues long: Histone acetyltransferase KAT8 (458 aa).

Low complexity-rich tracts occupy residues Met1–Thr17 and Pro25–Ala35. A disordered region spans residues Met1–Glu52. At Ala2 the chain carries N-acetylalanine. 2 positions are modified to phosphoserine: Ser37 and Ser42. Positions Val55–Ala110 constitute a Tudor-knot domain. Residue Lys113 is modified to N6-acetyllysine. Positions Arg140 to Ile149 match the Nuclear localization signal motif. Positions Thr174–Pro447 constitute an MYST-type HAT domain. Residues Thr174 to Lys458 are sufficient for interaction with KANSL1. Residues Leu207–Trp232 form a C2HC MYST-type zinc finger. Zn(2+)-binding residues include Cys210, Cys213, His226, and Cys230. N6-acetyllysine is present on Lys274. The acetyl-CoA site is built by Ile317, Thr319, Arg325, Arg326, Gly327, Gly329, and Lys330. Ser348 is subject to Phosphoserine. Residue Glu350 is the Proton donor/acceptor of the active site. Residues Ser354, Ser363, Tyr408, and Lys432 each coordinate acetyl-CoA.

Belongs to the MYST (SAS/MOZ) family. As to quaternary structure, component of a multisubunit histone acetyltransferase complex (MSL) at least composed of the MOF/KAT8, MSL1/hampin, MSL2L1 and MSL3L1. Component of the NSL complex at least composed of MOF/KAT8, KANSL1, KANSL2, KANSL3, MCRS1, PHF20, OGT1/OGT, WDR5 and HCFC1. Component of some MLL1/MLL complex, at least composed of the core components KMT2A/MLL1, ASH2L, HCFC1, WDR5 and RBBP5, as well as the facultative components BACC1, CHD8, E2F6, HSP70, INO80C, KANSL1, LAS1L, MAX, MCRS1, MGA, MOF/KAT8, PELP1, PHF20, PRP31, RING2, RUVB1/TIP49A, RUVB2/TIP49B, SENP3, TAF1, TAF4, TAF6, TAF7, TAF9 and TEX10. Interacts with the chromodomain of MORF4L1/MRG15. Interacts with ATM (via its Tudor-knot domain); possibly regulating the activity of ATM. Interacts with NELFD. Acetylation at Lys-274 facilitates cognate substrate Lys-binding and acetylation. Although considered as an autoacetylation event, acetylation at Lys-274 probably takes place via a non-enzymatic process following acetyl-CoA-binding, which primes KAT8 for cognate protein-lysine acetylation. In terms of tissue distribution, during oocyte development, expressed in both oocytes and granulosa cells.

It localises to the nucleus. It is found in the chromosome. The protein resides in the mitochondrion. The enzyme catalyses L-lysyl-[histone] + acetyl-CoA = N(6)-acetyl-L-lysyl-[histone] + CoA + H(+). It carries out the reaction L-lysyl-[protein] + acetyl-CoA = N(6)-acetyl-L-lysyl-[protein] + CoA + H(+). It catalyses the reaction propanoyl-CoA + L-lysyl-[protein] = N(6)-propanoyl-L-lysyl-[protein] + CoA + H(+). Its activity is regulated as follows. The acetyltransferase activity is inhibited by anacardic acid derivatives. In terms of biological role, histone acetyltransferase that catalyzes histone H4 acetylation at 'Lys-5'- and 'Lys-8' (H4K5ac and H4K8ac) or 'Lys-16' (H4K16ac), depending on the context. Catalytic component of the MSL histone acetyltransferase complex, a multiprotein complex that mediates the majority of histone H4 acetylation at 'Lys-16' (H4K16ac), an epigenetic mark that prevents chromatin compaction. H4K16ac constitutes the only acetylation mark intergenerationally transmitted and regulates key biological processes, such as oogenesis, embryonic stem cell pluripotency, hematopoiesis or glucose metabolism. The MSL complex is required for chromosome stability and genome integrity by maintaining homeostatic levels of H4K16ac. The MSL complex is also involved in gene dosage by promoting up-regulation of genes expressed by the X chromosome. X up-regulation is required to compensate for autosomal biallelic expression. The MSL complex also participates in gene dosage compensation by promoting expression of Tsix non-coding RNA. As part of the NSL histone acetyltransferase complex, catalyzes histone H4 acetylation at 'Lys-5'- and 'Lys-8' (H4K5ac and H4K8ac) at transcription start sites and promotes transcription initiation. The NSL complex also acts as a regulator of gene expression in mitochondria: KAT8 associates with mitochondrial DNA and controls expression of respiratory genes in an acetyltransferase-dependent mechanism. Also functions as an acetyltransferase for non-histone targets, such as ALKBH5, COX17, IRF3, KDM1A/LSD1, LMNA, PAX7 or TP53/p53. Acts as an inhibitor of antiviral immunity by acetylating IRF3, preventing IRF3 recruitment to promoters. Acts as a regulator of asymmetric division in muscle stem cells by mediating acetylation of PAX7. As part of the NSL complex, acetylates TP53/p53 at 'Lys-120'. Acts as a regulator of epithelial-to-mesenchymal transition as part of the NSL complex by mediating acetylation of KDM1A/LSD1. The NSL complex is required for nuclear architecture maintenance by mediating acetylation of LMNA. Promotes mitochondrial integrity by catalyzing acetylation of COX17. In addition to protein acetyltransferase activity, able to mediate protein propionylation. The protein is Histone acetyltransferase KAT8 of Mus musculus (Mouse).